Reading from the N-terminus, the 348-residue chain is Trace amine-associated receptor 9 (348 aa).

Topologically, residues 1 to 33 (MTSDFSPEPPMELCYENVNGSCIKSSYAPWPRA) are extracellular. N19 is a glycosylation site (N-linked (GlcNAc...) asparagine). 2 disulfides stabilise this stretch: C22–C186 and C105–C190. The chain crosses the membrane as a helical span at residues 34–58 (ILYGVLGLGALLAVFGNLLVIIAIL). Residues 59–68 (HFKQLHTPTN) lie on the Cytoplasmic side of the membrane. A helical membrane pass occupies residues 69–90 (FLVASLACADFLVGVTVMPFST). The Extracellular segment spans residues 91-105 (VRSVESCWYFGESYC). A helical membrane pass occupies residues 106 to 128 (KFHTCFDTSFCFASLFHLCCISI). Spermidine-binding residues include D112 and T113. The Cytoplasmic portion of the chain corresponds to 129–148 (DRYIAVTDPLTYPTKFTVSV). The helical transmembrane segment at 149–170 (SGLCIALSWFFSVTYSFSIFYT) threads the bilayer. Topologically, residues 171-196 (GANEEGIEELVVALTCVGGCQAPLNQ) are extracellular. Residues 174–187 (EEGIEELVVALTCV) are extracellular Loop 2 (ECL2). Residues 197–218 (NWVLLCFLLFFLPTVVMVFLYG) traverse the membrane as a helical segment. Topologically, residues 219–256 (RIFLVAKYQARKIEGTANQAQASSESYKERVAKRERKA) are cytoplasmic. A helical transmembrane segment spans residues 257-280 (AKTLGIAMAAFLVSWLPYIIDAVI). At 281-293 (DAYMNFITPAYVY) the chain is on the extracellular side. A helical membrane pass occupies residues 294 to 314 (EILVWCVYYNSAMNPLIYAFF). Topologically, residues 315–348 (YPWFRKAIKLIVSGKVFRADSSTTNLFSEEAGAG) are cytoplasmic.

Belongs to the G-protein coupled receptor 1 family. Specifically expressed in neurons of the olfactory epithelium.

Its subcellular location is the cell membrane. Olfactory receptor specific for trace amines, such as triethylamine, N,N-dimethylcyclohexylamine (DMCHA), beta-phenylethylamine (beta-PEA), cadaverine (CAD) and polyamines such as spermine and spermidine. Trace amine compounds are enriched in animal body fluids and act on trace amine-associated receptors (TAARs) to elicit both intraspecific and interspecific innate behaviors. Trace amine-binding causes a conformation change that triggers signaling via G(s)-class of G alpha proteins (GNAL or GNAS). In mature olfactory sensory neurons, Taar9 is coupled with GNAL/G(olf)G alpha protein and mediates activation of adenylate cyclase activity to activate cAMP signaling and eventually transmit odorant signals to achieve membrane depolarization. In immature olfactory sensory neurons, Taar9 is coupled with GNAS/G(s) G alpha proteins. This chain is Trace amine-associated receptor 9, found in Mus musculus (Mouse).